A 408-amino-acid chain; its full sequence is Large ribosomal subunit protein uL4 (408 aa).

The interval 58 to 98 (PYAVSKKAGHQTSAESWGTGRAVSRIPRVPGGGTHRAGQGA) is disordered.

The protein belongs to the universal ribosomal protein uL4 family.

This chain is Large ribosomal subunit protein uL4 (RPL4), found in Prunus armeniaca (Apricot).